Reading from the N-terminus, the 861-residue chain is DNA mismatch repair protein MutS (861 aa).

Position 618-625 (618-625 (GPNMGGKS)) interacts with ATP.

It belongs to the DNA mismatch repair MutS family.

Functionally, this protein is involved in the repair of mismatches in DNA. It is possible that it carries out the mismatch recognition step. This protein has a weak ATPase activity. The chain is DNA mismatch repair protein MutS from Shewanella sp. (strain ANA-3).